Here is an 875-residue protein sequence, read N- to C-terminus: Neurotrypsin (875 aa).

The N-terminal stretch at 1 to 20 is a signal peptide; the sequence is MTLARFVLALMLGALPEVVG. An N-linked (GlcNAc...) asparagine glycan is attached at asparagine 26. The tract at residues 29-88 is disordered; it reads LHHSHRHSPPAGPHYPYYLPTQQRPPRTRPPPPLPRFPRPPRALPAQRPHALQAGHTPRP. Positions 56–71 are enriched in pro residues; it reads TRPPPPLPRFPRPPRA. The region spanning 93–165 is the Kringle domain; that stretch reads CPAGEPWVSV…GKVDWGYCDC (73 aa). Disulfide bonds link cysteine 93–cysteine 165, cysteine 109–cysteine 149, cysteine 138–cysteine 163, cysteine 195–cysteine 259, cysteine 208–cysteine 269, cysteine 239–cysteine 249, cysteine 305–cysteine 369, cysteine 318–cysteine 379, cysteine 349–cysteine 359, cysteine 412–cysteine 475, cysteine 425–cysteine 485, cysteine 455–cysteine 465, cysteine 525–cysteine 589, cysteine 538–cysteine 599, cysteine 569–cysteine 579, cysteine 619–cysteine 750, cysteine 661–cysteine 677, cysteine 765–cysteine 831, cysteine 794–cysteine 808, and cysteine 821–cysteine 850. SRCR domains lie at 170–271, 280–381, 387–487, and 500–601; these read VRLR…TCSF, IRLA…SCTP, IRLA…ACYP, and VRLM…ICDY. The zymogen activation region stretch occupies residues 619 to 630; sequence CGLRLLHRRQKR. In terms of domain architecture, Peptidase S1 spans 631–874; the sequence is IIGGKNSLRG…FVPWIKSVTK (244 aa). Residue histidine 676 is the Charge relay system of the active site. Asparagine 683 carries N-linked (GlcNAc...) asparagine glycosylation. Aspartate 726 (charge relay system) is an active-site residue. Serine 825 functions as the Charge relay system in the catalytic mechanism.

Belongs to the peptidase S1 family. In terms of tissue distribution, brain and Leydig cells of the testis.

The protein resides in the secreted. Plays a role in neuronal plasticity and the proteolytic action may subserve structural reorganizations associated with learning and memory operations. This chain is Neurotrypsin (PRSS12), found in Homo sapiens (Human).